We begin with the raw amino-acid sequence, 67 residues long: DNA-directed RNA polymerase subunit Rpo10 (67 aa).

C7, C10, C44, and C45 together coordinate Zn(2+).

It belongs to the archaeal Rpo10/eukaryotic RPB10 RNA polymerase subunit family. In terms of assembly, part of the RNA polymerase complex. Zn(2+) serves as cofactor.

It localises to the cytoplasm. The catalysed reaction is RNA(n) + a ribonucleoside 5'-triphosphate = RNA(n+1) + diphosphate. Its function is as follows. DNA-dependent RNA polymerase (RNAP) catalyzes the transcription of DNA into RNA using the four ribonucleoside triphosphates as substrates. The protein is DNA-directed RNA polymerase subunit Rpo10 of Caldivirga maquilingensis (strain ATCC 700844 / DSM 13496 / JCM 10307 / IC-167).